Reading from the N-terminus, the 208-residue chain is Glutathione S-transferase 1 (208 aa).

In terms of domain architecture, GST N-terminal spans 1–80; it reads MDFYYLPGSA…YLVEKYGKTD (80 aa). Residues Ser9, 50 to 52, and 64 to 66 each bind glutathione; these read HTI and ESR. Positions 86 to 207 constitute a GST C-terminal domain; the sequence is CPKKRAVINQ…AGCLEFKKYF (122 aa).

The protein belongs to the GST superfamily. Theta family. As to quaternary structure, homodimer.

It catalyses the reaction RX + glutathione = an S-substituted glutathione + a halide anion + H(+). Its function is as follows. Conjugation of reduced glutathione to a wide number of exogenous and endogenous hydrophobic electrophiles. The sequence is that of Glutathione S-transferase 1 (Gst1) from Musca domestica (House fly).